The sequence spans 831 residues: Prolactin receptor (831 aa).

The first 23 residues, Met-1 to Thr-23, serve as a signal peptide directing secretion. The Extracellular segment spans residues Ser-24–Asp-438. 4 consecutive Fibronectin type-III domains span residues Lys-30–Gly-128, Ser-129–Glu-232, Lys-233–Asp-331, and Pro-332–Asp-433. A disulfide bond links Cys-36 and Cys-46. An N-linked (GlcNAc...) asparagine glycan is attached at Asn-59. A disulfide bridge connects residues Cys-75 and Cys-86. Asn-91, Asn-100, Asn-112, Asn-132, Asn-262, Asn-303, Asn-315, and Asn-335 each carry an N-linked (GlcNAc...) asparagine glycan. The Zn(2+) site is built by Asp-414 and His-416. Positions Trp-419–Ser-423 match the WSXWS motif motif. The helical transmembrane segment at Met-439–Thr-459 threads the bilayer. Residues Met-460–Lys-831 lie on the Cytoplasmic side of the membrane. The Box 1 motif motif lies at Ile-471–Lys-479. Disordered stretches follow at residues His-527–Leu-563 and His-776–Lys-831. Over residues Thr-545 to Gly-554 the composition is skewed to basic and acidic residues. Residues Thr-777–Tyr-803 show a composition bias toward polar residues.

This sequence belongs to the type I cytokine receptor family. Type 1 subfamily.

It is found in the membrane. This is a receptor for the anterior pituitary hormone prolactin. This is Prolactin receptor (PRLR) from Meleagris gallopavo (Wild turkey).